We begin with the raw amino-acid sequence, 114 residues long: Hydrogenase maturation factor HypA (114 aa).

His2 contributes to the Ni(2+) binding site. Residues Cys70, Cys73, Cys86, and Cys89 each contribute to the Zn(2+) site.

It belongs to the HypA/HybF family.

Its function is as follows. Involved in the maturation of [NiFe] hydrogenases. Required for nickel insertion into the metal center of the hydrogenase. The sequence is that of Hydrogenase maturation factor HypA from Trichodesmium erythraeum (strain IMS101).